The primary structure comprises 390 residues: NADH-quinone oxidoreductase subunit D (390 aa).

It belongs to the complex I 49 kDa subunit family. As to quaternary structure, NDH-1 is composed of 14 different subunits. Subunits NuoB, C, D, E, F, and G constitute the peripheral sector of the complex.

It is found in the cell membrane. The catalysed reaction is a quinone + NADH + 5 H(+)(in) = a quinol + NAD(+) + 4 H(+)(out). Its function is as follows. NDH-1 shuttles electrons from NADH, via FMN and iron-sulfur (Fe-S) centers, to quinones in the respiratory chain. The immediate electron acceptor for the enzyme in this species is believed to be ubiquinone. Couples the redox reaction to proton translocation (for every two electrons transferred, four hydrogen ions are translocated across the cytoplasmic membrane), and thus conserves the redox energy in a proton gradient. The sequence is that of NADH-quinone oxidoreductase subunit D from Wolbachia pipientis subsp. Culex pipiens (strain wPip).